The following is a 395-amino-acid chain: uncharacterized protein (395 aa).

Residues 182 to 238 (KKLEDILSTIAEIEDSIELEKILSLDQFLKSKLSNIKITNNQIDEAKAEFKEMFNKK) adopt a coiled-coil conformation.

This is an uncharacterized protein from Acanthamoeba polyphaga (Amoeba).